We begin with the raw amino-acid sequence, 690 residues long: MSCFSQVLNPITGENSWQEREDDYDYHQEVANAGFGDMLHDWERNQKYFAALRKTIAEMRTAGKEVHVLDIGTGTGILSMMALEAGADSVTACEAFLPMANCAEKILAANGAADKVRLIRKRSTDIQIGEDMPRKANLLVAELLDTELIGEGAIGIYNHAHDELLTEDALCIPARARCYAQVAQSPLAAQWNSLKSLANLDGEPLLQPPAQLKGCKGEAGLHDVQLSQLPSHTFRPLTDPVEIFQFDFQRKKQREKKRDQLLKVQSNQPGSAELVFYWWDIQLDDGGEILLSCAPYWAHPEIHELSGKKGKDLPLPNVVPWRDHWMQAIYYIPKPLQLLEAGKSFHLSCHHDEYSLWFDAREEAPAKSVSRHTCTCDLHMTYSRSRIGQMNQSTRNKRYLRYLEENIEAEKSKVLVLGNGCLLGLASSALGATSVQLHEPHRFSRRLLESIVQHNQLKNVEFVDKVEEVEDSQLAGLTHVFAEPYFLNAILPWDNFYFGTLLAKIKDKLPEDVKISPCSARIYALPVEFLDLHKIRAPVVSCEGFDLRLFDEMVERSAEQAVTLVEAQPLWEYPCRALSEPQEILNVDFNKFSEEHHLKGTIDLKHPGTCNGVALWVDWQLINDSSPRSIVSTGPSEAVTPGEFVKWDMFVRQGVHFPQKTNQTISSLAWSTDFKPLLGQLSFTFGQKKP.

SAM-dependent MTase PRMT-type domains follow at residues 14-357 and 366-690; these read ENSW…YSLW and AKSV…QKKP.

This sequence belongs to the class I-like SAM-binding methyltransferase superfamily. Protein arginine N-methyltransferase family. PRMT7 subfamily.

In terms of biological role, essential arginine methyltransferase that can both catalyze the formation of omega-N monomethylarginine (MMA) and symmetrical dimethylarginine (sDMA). Specifically mediates the symmetrical dimethylation of arginine residues in the small nuclear ribonucleoproteins SmD1 and SmD3. In Drosophila ananassae (Fruit fly), this protein is Protein arginine N-methyltransferase 7 (Art7).